Consider the following 184-residue polypeptide: Peptide deformylase (184 aa).

Positions 111 and 154 each coordinate Fe cation. The active site involves glutamate 155. Residue histidine 158 participates in Fe cation binding.

The protein belongs to the polypeptide deformylase family. The cofactor is Fe(2+).

The catalysed reaction is N-terminal N-formyl-L-methionyl-[peptide] + H2O = N-terminal L-methionyl-[peptide] + formate. Removes the formyl group from the N-terminal Met of newly synthesized proteins. Requires at least a dipeptide for an efficient rate of reaction. N-terminal L-methionine is a prerequisite for activity but the enzyme has broad specificity at other positions. The sequence is that of Peptide deformylase from Lactobacillus delbrueckii subsp. bulgaricus (strain ATCC 11842 / DSM 20081 / BCRC 10696 / JCM 1002 / NBRC 13953 / NCIMB 11778 / NCTC 12712 / WDCM 00102 / Lb 14).